A 227-amino-acid polypeptide reads, in one-letter code: Acyl-protein thioesterase 1 (227 aa).

Active-site charge relay system residues include Ser-119, Asp-173, and His-207.

It belongs to the AB hydrolase superfamily. AB hydrolase 2 family.

The protein resides in the cytoplasm. Its subcellular location is the nucleus. The catalysed reaction is S-hexadecanoyl-L-cysteinyl-[protein] + H2O = L-cysteinyl-[protein] + hexadecanoate + H(+). In terms of biological role, hydrolyzes fatty acids from S-acylated cysteine residues in proteins with a strong preference for palmitoylated G-alpha proteins over other acyl substrates. Mediates the deacylation of G-alpha proteins such as GPA1 in vivo, but has weak or no activity toward palmitoylated Ras proteins. Has weak lysophospholipase activity in vitro; however such activity may not exist in vivo. The polypeptide is Acyl-protein thioesterase 1 (Saccharomyces cerevisiae (strain ATCC 204508 / S288c) (Baker's yeast)).